A 503-amino-acid polypeptide reads, in one-letter code: Arabinose import ATP-binding protein AraG 1 (503 aa).

ABC transporter domains follow at residues 5–240 and 253–497; these read LRFD…MVGR and LGDV…LPQG. An ATP-binding site is contributed by 37–44; that stretch reads GENGAGKS.

It belongs to the ABC transporter superfamily. Arabinose importer (TC 3.A.1.2.2) family. As to quaternary structure, the complex is composed of two ATP-binding proteins (AraG), two transmembrane proteins (AraH) and a solute-binding protein (AraF).

The protein resides in the cell inner membrane. It catalyses the reaction L-arabinose(out) + ATP + H2O = L-arabinose(in) + ADP + phosphate + H(+). Functionally, part of the ABC transporter complex AraFGH involved in arabinose import. Responsible for energy coupling to the transport system. In Burkholderia thailandensis (strain ATCC 700388 / DSM 13276 / CCUG 48851 / CIP 106301 / E264), this protein is Arabinose import ATP-binding protein AraG 1.